Here is a 254-residue protein sequence, read N- to C-terminus: Alcohol dehydrogenase 1 (254 aa).

NAD(+) is bound at residue 10-33 (FVAGLGGIGFDTSREIVKSGPKNL). Residue Ser-138 coordinates substrate. Tyr-151 (proton acceptor) is an active-site residue.

It belongs to the short-chain dehydrogenases/reductases (SDR) family. Homodimer.

It carries out the reaction a primary alcohol + NAD(+) = an aldehyde + NADH + H(+). The catalysed reaction is a secondary alcohol + NAD(+) = a ketone + NADH + H(+). The sequence is that of Alcohol dehydrogenase 1 (Adh1) from Drosophila mulleri (Fruit fly).